A 490-amino-acid polypeptide reads, in one-letter code: Stomatal closure-related actin-binding protein 3 (490 aa).

It belongs to the SCAB family. As to expression, expressed in roots, stems, leaves, siliques and flowers.

It is found in the cytoplasm. The protein localises to the cytoskeleton. In terms of biological role, probable plant-specific actin binding protein that bundles and stabilizes microfilaments (MFs). The protein is Stomatal closure-related actin-binding protein 3 of Arabidopsis thaliana (Mouse-ear cress).